Here is a 104-residue protein sequence, read N- to C-terminus: UPF0235 protein MTH_637 (104 aa).

Belongs to the UPF0235 family.

In Methanothermobacter thermautotrophicus (strain ATCC 29096 / DSM 1053 / JCM 10044 / NBRC 100330 / Delta H) (Methanobacterium thermoautotrophicum), this protein is UPF0235 protein MTH_637.